The following is a 376-amino-acid chain: MRDPAPSNSEMKRVIVGMSGGVDSSVSAVLLMEQGYQVEGLFMKNWEEDDGTEYCTAREDLADAQAVCDKIGIKLHTANFAAEYWDNVFEHFLEEYKAGRTPNPDILCNREIKFKAFLDYALMLGADLIATGHYVRRRDIDGRTELLKGLDPNKDQSYFLHAVGGEQIARTLFPVGELEKPEVRAIAEKHGLATAKKKDSTGICFIGERRFTDFLRQYLPAQPGEIKTTEGEVIGRHSGLMYHTIGQRQGLGIGGLKDASDDPWYVLVKDLENNELIVGQGNDHPWLFSRALVSSEIYWVNPIDLSSPRRLTAKVRYRQGDQPCTLEKTADGYRATFDDPQRAVTPGQSVVFYDGEICLGGGVIEIAEPWTTKDKR.

ATP-binding positions include 17-24 and Met-43; that span reads GMSGGVDS. The interaction with target base in tRNA stretch occupies residues 103-105; it reads NPD. Cys-108 functions as the Nucleophile in the catalytic mechanism. Cys-108 and Cys-204 form a disulfide bridge. Gly-132 provides a ligand contact to ATP. An interaction with tRNA region spans residues 154 to 156; it reads KDQ. The active-site Cysteine persulfide intermediate is the Cys-204. Residues 316–317 form an interaction with tRNA region; that stretch reads RY.

This sequence belongs to the MnmA/TRMU family.

The protein resides in the cytoplasm. The catalysed reaction is S-sulfanyl-L-cysteinyl-[protein] + uridine(34) in tRNA + AH2 + ATP = 2-thiouridine(34) in tRNA + L-cysteinyl-[protein] + A + AMP + diphosphate + H(+). Functionally, catalyzes the 2-thiolation of uridine at the wobble position (U34) of tRNA, leading to the formation of s(2)U34. This Pseudomonas syringae pv. syringae (strain B728a) protein is tRNA-specific 2-thiouridylase MnmA.